The following is a 98-amino-acid chain: NADH-ubiquinone oxidoreductase chain 4L (98 aa).

Helical transmembrane passes span 2 to 22, 29 to 49, and 61 to 81; these read PSIS…MLMF, SLLC…LTIL, and ILLL…LVMV.

This sequence belongs to the complex I subunit 4L family. In terms of assembly, core subunit of respiratory chain NADH dehydrogenase (Complex I) which is composed of 45 different subunits.

The protein localises to the mitochondrion inner membrane. It catalyses the reaction a ubiquinone + NADH + 5 H(+)(in) = a ubiquinol + NAD(+) + 4 H(+)(out). Functionally, core subunit of the mitochondrial membrane respiratory chain NADH dehydrogenase (Complex I) which catalyzes electron transfer from NADH through the respiratory chain, using ubiquinone as an electron acceptor. Part of the enzyme membrane arm which is embedded in the lipid bilayer and involved in proton translocation. This chain is NADH-ubiquinone oxidoreductase chain 4L (MT-ND4L), found in Microcebus mittermeieri (Mittermeier's mouse lemur).